The chain runs to 545 residues: EH domain-containing protein 1 (545 aa).

EF-hand domains follow at residues 14–49 (ENQM…SNLP) and 50–83 (RPEL…VSLA). In terms of domain architecture, EH spans 15-93 (NQMIYKEWFE…QTGHEISHEV (79 aa)). 8 residues coordinate Ca(2+): Asp-27, Asp-29, Asp-31, Arg-33, Asp-38, Asp-61, Tyr-67, and Glu-72. The 236-residue stretch at 194–429 (FDAKPMVMLL…DLLADLKDIP (236 aa)) folds into the Dynamin-type G domain. The segment at 204–211 (GQYSTGKT) is G1 motif. A GTP-binding site is contributed by 204-211 (GQYSTGKT). The tract at residues 230-231 (EP) is G2 motif. The interval 292-295 (DTPG) is G3 motif. GTP contacts are provided by residues 309-313 (DFTGV) and Lys-359. Residues 358–361 (NKAD) are G4 motif. Val-382 is a region of interest (G5 motif). 395–398 (SFSD) is a GTP binding site. Positions 467–490 (KAKAQQKLIDNLEDEFGKVQREHH) form a coiled coil.

Belongs to the TRAFAC class dynamin-like GTPase superfamily. Dynamin/Fzo/YdjA family. EHD subfamily. In terms of assembly, homooligomer, and heterooligomer with EHD2.

Its subcellular location is the endosome membrane. It localises to the cell membrane. The protein resides in the cytoplasm. The enzyme catalyses GTP + H2O = GDP + phosphate + H(+). In terms of biological role, involved in endocytosis positive regulation. Acts in early endocytic membrane fusion and membrane trafficking of recycling endosomes. Confers salt tolerance. The chain is EH domain-containing protein 1 from Arabidopsis thaliana (Mouse-ear cress).